We begin with the raw amino-acid sequence, 433 residues long: Dihydrolipoyllysine-residue acetyltransferase component of pyruvate dehydrogenase complex (433 aa).

The Lipoyl-binding domain maps to Ala2 to Asp77. Lys43 is modified (N6-lipoyllysine). Disordered stretches follow at residues Asp80–Arg134 and Tyr164–Thr204. Basic and acidic residues-rich tracts occupy residues Met84 to Glu103 and Glu117 to Thr126. The 38-residue stretch at Lys128–Leu165 folds into the Peripheral subunit-binding (PSBD) domain. Low complexity predominate over residues Asn166–Ser185. Residue His404 is part of the active site.

Belongs to the 2-oxoacid dehydrogenase family. In terms of assembly, forms a 24-polypeptide structural core with octahedral symmetry. The cofactor is (R)-lipoate.

The catalysed reaction is N(6)-[(R)-dihydrolipoyl]-L-lysyl-[protein] + acetyl-CoA = N(6)-[(R)-S(8)-acetyldihydrolipoyl]-L-lysyl-[protein] + CoA. Functionally, the pyruvate dehydrogenase complex catalyzes the overall conversion of pyruvate to acetyl-CoA and CO(2). It contains multiple copies of three enzymatic components: pyruvate dehydrogenase (E1), dihydrolipoamide acetyltransferase (E2) and lipoamide dehydrogenase (E3). The chain is Dihydrolipoyllysine-residue acetyltransferase component of pyruvate dehydrogenase complex (pdhC) from Staphylococcus epidermidis (strain ATCC 35984 / DSM 28319 / BCRC 17069 / CCUG 31568 / BM 3577 / RP62A).